A 205-amino-acid polypeptide reads, in one-letter code: High frequency lysogenization protein HflD homolog (205 aa).

This sequence belongs to the HflD family.

The protein resides in the cytoplasm. It localises to the cell inner membrane. The protein is High frequency lysogenization protein HflD homolog of Shewanella piezotolerans (strain WP3 / JCM 13877).